Consider the following 575-residue polypeptide: Alpha-(1,6)-fucosyltransferase (575 aa).

The Cytoplasmic segment spans residues 1-9 (MRPWTGSWR). A helical; Signal-anchor for type II membrane protein transmembrane segment spans residues 10-30 (WIMLILFAWGTLLFYIGGHLV). The Lumenal portion of the chain corresponds to 31 to 575 (RDNDHPDHSS…KYPTYPEAEK (545 aa)). Disulfide bonds link cysteine 204-cysteine 266, cysteine 212-cysteine 230, and cysteine 218-cysteine 222. The GT23 domain occupies 206–493 (KAKKLVCNIN…PDASANFHSL (288 aa)). A Phosphoserine modification is found at serine 278. An SH3-binding motif is present at residues 299–305 (PRPPYLP). An important for donor substrate binding region spans residues 365-366 (RR). A disulfide bond links cysteine 465 and cysteine 472. Residues 502-563 (QNAHNQIAIY…PSYKVREKIE (62 aa)) form the SH3 domain.

It belongs to the glycosyltransferase 23 family. Tyrosine phosphorylated by PKDCC/VLK.

It is found in the golgi apparatus. The protein localises to the golgi stack membrane. The catalysed reaction is N(4)-{beta-D-GlcNAc-(1-&gt;2)-alpha-D-Man-(1-&gt;3)-[beta-D-GlcNAc-(1-&gt;2)-alpha-D-Man-(1-&gt;6)]-beta-D-Man-(1-&gt;4)-beta-D-GlcNAc-(1-&gt;4)-beta-D-GlcNAc}-L-asparaginyl-[protein] + GDP-beta-L-fucose = an N(4)-{beta-D-GlcNAc-(1-&gt;2)-alpha-D-Man-(1-&gt;3)-[beta-D-GlcNAc-(1-&gt;2)-alpha-D-Man-(1-&gt;6)]-beta-D-Man-(1-&gt;4)-beta-D-GlcNAc-(1-&gt;4)-[alpha-L-Fuc-(1-&gt;6)]-beta-D-GlcNAc}-L-asparaginyl-[protein] + GDP + H(+). The protein operates within protein modification; protein glycosylation. In terms of biological role, catalyzes the addition of fucose in alpha 1-6 linkage to the first GlcNAc residue, next to the peptide chains in N-glycans. In Canis lupus familiaris (Dog), this protein is Alpha-(1,6)-fucosyltransferase (FUT8).